Consider the following 262-residue polypeptide: Glutamate 5-kinase (262 aa).

K14 contacts ATP. 3 residues coordinate substrate: S54, D141, and N153. Residues 173-174 and 214-220 each bind ATP; these read SD and TGGMVTK.

It belongs to the glutamate 5-kinase family.

The protein resides in the cytoplasm. The catalysed reaction is L-glutamate + ATP = L-glutamyl 5-phosphate + ADP. Its pathway is amino-acid biosynthesis; L-proline biosynthesis; L-glutamate 5-semialdehyde from L-glutamate: step 1/2. Functionally, catalyzes the transfer of a phosphate group to glutamate to form L-glutamate 5-phosphate. The polypeptide is Glutamate 5-kinase (Symbiobacterium thermophilum (strain DSM 24528 / JCM 14929 / IAM 14863 / T)).